A 471-amino-acid polypeptide reads, in one-letter code: UDP-N-acetylmuramoylalanine--D-glutamate ligase (471 aa).

135-141 is a binding site for ATP; that stretch reads GTNGKTT.

It belongs to the MurCDEF family.

The protein localises to the cytoplasm. It carries out the reaction UDP-N-acetyl-alpha-D-muramoyl-L-alanine + D-glutamate + ATP = UDP-N-acetyl-alpha-D-muramoyl-L-alanyl-D-glutamate + ADP + phosphate + H(+). The protein operates within cell wall biogenesis; peptidoglycan biosynthesis. Its function is as follows. Cell wall formation. Catalyzes the addition of glutamate to the nucleotide precursor UDP-N-acetylmuramoyl-L-alanine (UMA). In Frankia casuarinae (strain DSM 45818 / CECT 9043 / HFP020203 / CcI3), this protein is UDP-N-acetylmuramoylalanine--D-glutamate ligase.